A 249-amino-acid polypeptide reads, in one-letter code: Globin-like protein 9 (249 aa).

The interval 20–43 is disordered; that stretch reads TNKGPNGLARRGTQRGCSRSKSTR. A Globin domain is found at 52-205; the sequence is SLTFSQKQAL…LIDELRGGFE (154 aa). Heme is bound by residues H116 and H148.

Belongs to the globin family.

The chain is Globin-like protein 9 (glb-9) from Caenorhabditis elegans.